Consider the following 476-residue polypeptide: Protein DETOXIFICATION 4 (476 aa).

12 helical membrane passes run 35-55 (AVPM…SVMV), 66-86 (GVAL…FGLV), 117-137 (IPIC…LISL), 154-174 (LIPT…LLAQ), 176-196 (LVLP…AVCW), 208-228 (GAAL…SCYV), 260-280 (AAML…SGLL), 289-309 (VLSI…GVAA), 332-352 (LAGL…LFAF), 370-390 (VADL…TAVL), 408-428 (VVAY…SCEL), and 433-453 (LWCG…IVTA).

It belongs to the multi antimicrobial extrusion (MATE) (TC 2.A.66.1) family.

The protein resides in the membrane. This chain is Protein DETOXIFICATION 4, found in Arabidopsis thaliana (Mouse-ear cress).